A 582-amino-acid polypeptide reads, in one-letter code: Aspartate--tRNA ligase (582 aa).

L-aspartate is bound at residue Glu-174. The tract at residues Gln-198–Lys-201 is aspartate. Arg-220 is a binding site for L-aspartate. Residues Arg-220–Glu-222 and Gln-229 each bind ATP. Residue His-443 coordinates L-aspartate. Glu-477 is a binding site for ATP. Arg-484 contacts L-aspartate. Gly-529–Arg-532 contributes to the ATP binding site.

The protein belongs to the class-II aminoacyl-tRNA synthetase family. Type 1 subfamily. In terms of assembly, homodimer.

It is found in the cytoplasm. It catalyses the reaction tRNA(Asp) + L-aspartate + ATP = L-aspartyl-tRNA(Asp) + AMP + diphosphate. Functionally, catalyzes the attachment of L-aspartate to tRNA(Asp) in a two-step reaction: L-aspartate is first activated by ATP to form Asp-AMP and then transferred to the acceptor end of tRNA(Asp). The polypeptide is Aspartate--tRNA ligase (Streptococcus pyogenes serotype M1).